The following is a 504-amino-acid chain: Anaerobic nitric oxide reductase transcription regulator NorR (504 aa).

At D57 the chain carries 4-aspartylphosphate. Residues 187–416 (MIGLSPGMTQ…LEHAIHRAVV (230 aa)) form the Sigma-54 factor interaction domain. ATP-binding positions include 215-222 (GETGTGKE) and 278-287 (ADNGTLFLDE). The H-T-H motif DNA-binding region spans 479-498 (WAACARMLETDVANLHRLAK).

It functions in the pathway nitrogen metabolism; nitric oxide reduction. Required for the expression of anaerobic nitric oxide (NO) reductase, acts as a transcriptional activator for at least the norVW operon. Activation also requires sigma-54. This is Anaerobic nitric oxide reductase transcription regulator NorR from Shigella boydii serotype 4 (strain Sb227).